The following is a 474-amino-acid chain: 6-phospho-beta-galactosidase (474 aa).

5 residues coordinate D-galactose 6-phosphate: glutamine 19, histidine 116, asparagine 159, glutamate 160, and asparagine 297. Glutamate 160 (proton donor) is an active-site residue. Glutamate 375 (nucleophile) is an active-site residue. Residues serine 433, tryptophan 434, lysine 440, and tyrosine 442 each contribute to the D-galactose 6-phosphate site.

Belongs to the glycosyl hydrolase 1 family.

It catalyses the reaction a 6-phospho-beta-D-galactoside + H2O = D-galactose 6-phosphate + an alcohol. Its pathway is carbohydrate metabolism; lactose degradation; D-galactose 6-phosphate and beta-D-glucose from lactose 6-phosphate: step 1/1. This chain is 6-phospho-beta-galactosidase, found in Lacticaseibacillus casei (strain BL23) (Lactobacillus casei).